A 538-amino-acid chain; its full sequence is Syncytin-1 (538 aa).

The first 20 residues, 1–20, serve as a signal peptide directing secretion; it reads MALPYHILLFTVLLPSFTLT. At 21–443 the chain is on the extracellular side; it reads APPPCRCMTS…NTGPWGLLSQ (423 aa). An N-linked (GlcNAc...) asparagine glycan is attached at N169. The CXXC motif lies at 186-189; the sequence is CWIC. Intrachain disulfides connect C186/C189, C186/C405, and C397/C404. N208, N214, N234, and N281 each carry an N-linked (GlcNAc...) asparagine glycan. Residues 320-340 are fusion peptide; sequence ILPFVIGAGVLGALGTGIGGI. Residues 380 to 396 form an immunosuppression region; it reads LQNRRALDLLTAERGGT. Residues 397–405 carry the CX6CC motif; that stretch reads CLFLGEECC. An N-linked (GlcNAc...) asparagine glycan is attached at N409. The helical transmembrane segment at 444-464 threads the bilayer; sequence WMPWILPFLGPLAAIILLLLF. Residues 465 to 484 are essential for the fusiogenic function; that stretch reads GPCIFNLLVNFVSSRIEAVK. At 465-538 the chain is on the cytoplasmic side; sequence GPCIFNLLVN…LLRPNSAGSS (74 aa). Positions 496 to 538 are disordered; the sequence is KIYRRPLDRPASPRSDVNDIKCTPPEEISTAQPLLRPNSAGSS.

Belongs to the gamma type-C retroviral envelope protein family. HERV class-I W env subfamily. In terms of assembly, the mature envelope protein (Env) consists of a trimer of SU-TM heterodimers attached probably by a labile interchain disulfide bond. Interacts with the C-type lectin CD209/DC-SIGN. Specific enzymatic cleavages in vivo yield mature proteins. Envelope glycoproteins are synthesized as an inactive precursor that is heavily N-glycosylated and processed likely by furin in the Golgi to yield the mature SU and TM proteins. The cleavage site between SU and TM requires the minimal sequence [KR]-X-[KR]-R. Post-translationally, the CXXC motif is highly conserved across a broad range of retroviral envelope proteins. It is thought to participate in the formation of a labile disulfide bond possibly with the CX6CC motif present in the transmembrane protein.

The protein localises to the cell membrane. It is found in the virion. In terms of biological role, this endogenous retroviral envelope protein has retained its original fusogenic properties and participates in trophoblast fusion and the formation of a syncytium during placenta morphogenesis. May recognize and induce fusion through binding of SLC1A4 and SLC1A5. Functionally, endogenous envelope proteins may have kept, lost or modified their original function during evolution. Retroviral envelope proteins mediate receptor recognition and membrane fusion during early infection. The surface protein (SU) mediates receptor recognition, while the transmembrane protein (TM) acts as a class I viral fusion protein. The protein may have at least 3 conformational states: pre-fusion native state, pre-hairpin intermediate state, and post-fusion hairpin state. During viral and target cell membrane fusion, the coiled coil regions (heptad repeats) assume a trimer-of-hairpins structure, positioning the fusion peptide in close proximity to the C-terminal region of the ectodomain. The formation of this structure appears to drive apposition and subsequent fusion of membranes. In Gorilla gorilla gorilla (Western lowland gorilla), this protein is Syncytin-1 (ERVW-1).